A 103-amino-acid chain; its full sequence is ATP synthase F(0) complex subunit g, mitochondrial (103 aa).

At alanine 2 the chain carries N-acetylalanine. N6-acetyllysine is present on residues lysine 11, lysine 24, lysine 35, and lysine 54.

Component of the ATP synthase complex composed at least of ATP5F1A/subunit alpha, ATP5F1B/subunit beta, ATP5MC1/subunit c (homooctomer), MT-ATP6/subunit a, MT-ATP8/subunit 8, ATP5ME/subunit e, ATP5MF/subunit f, ATP5MG/subunit g, ATP5MK/subunit k, ATP5MJ/subunit j, ATP5F1C/subunit gamma, ATP5F1D/subunit delta, ATP5F1E/subunit epsilon, ATP5PF/subunit F6, ATP5PB/subunit b, ATP5PD/subunit d, ATP5PO/subunit OSCP. ATP synthase complex consists of a soluble F(1) head domain (subunits alpha(3) and beta(3)) - the catalytic core - and a membrane F(0) domain - the membrane proton channel (subunits c, a, 8, e, f, g, k and j). These two domains are linked by a central stalk (subunits gamma, delta, and epsilon) rotating inside the F1 region and a stationary peripheral stalk (subunits F6, b, d, and OSCP).

The protein localises to the mitochondrion. It localises to the mitochondrion inner membrane. Its function is as follows. Subunit g, of the mitochondrial membrane ATP synthase complex (F(1)F(0) ATP synthase or Complex V) that produces ATP from ADP in the presence of a proton gradient across the membrane which is generated by electron transport complexes of the respiratory chain. ATP synthase complex consist of a soluble F(1) head domain - the catalytic core - and a membrane F(1) domain - the membrane proton channel. These two domains are linked by a central stalk rotating inside the F(1) region and a stationary peripheral stalk. During catalysis, ATP synthesis in the catalytic domain of F(1) is coupled via a rotary mechanism of the central stalk subunits to proton translocation. In vivo, can only synthesize ATP although its ATP hydrolase activity can be activated artificially in vitro. Part of the complex F(0) domain. This chain is ATP synthase F(0) complex subunit g, mitochondrial, found in Bos taurus (Bovine).